The following is a 258-amino-acid chain: Acyl-[acyl-carrier-protein]--UDP-N-acetylglucosamine O-acyltransferase (258 aa).

Belongs to the transferase hexapeptide repeat family. LpxA subfamily. In terms of assembly, homotrimer.

It localises to the cytoplasm. It carries out the reaction a (3R)-hydroxyacyl-[ACP] + UDP-N-acetyl-alpha-D-glucosamine = a UDP-3-O-[(3R)-3-hydroxyacyl]-N-acetyl-alpha-D-glucosamine + holo-[ACP]. It functions in the pathway glycolipid biosynthesis; lipid IV(A) biosynthesis; lipid IV(A) from (3R)-3-hydroxytetradecanoyl-[acyl-carrier-protein] and UDP-N-acetyl-alpha-D-glucosamine: step 1/6. Its function is as follows. Involved in the biosynthesis of lipid A, a phosphorylated glycolipid that anchors the lipopolysaccharide to the outer membrane of the cell. This is Acyl-[acyl-carrier-protein]--UDP-N-acetylglucosamine O-acyltransferase from Pseudomonas syringae pv. tomato (strain ATCC BAA-871 / DC3000).